The primary structure comprises 101 residues: Cell cycle protein GpsB (101 aa).

The stretch at 34–71 (LDMVIKDYETFNQEIEKLQQENLHLSKQLEEAVEQGKR) forms a coiled coil.

Belongs to the GpsB family. Forms polymers through the coiled coil domains. Interacts with PBP1, MreC and EzrA.

It localises to the cytoplasm. In terms of biological role, divisome component that associates with the complex late in its assembly, after the Z-ring is formed, and is dependent on DivIC and PBP2B for its recruitment to the divisome. Together with EzrA, is a key component of the system that regulates PBP1 localization during cell cycle progression. Its main role could be the removal of PBP1 from the cell pole after pole maturation is completed. Also contributes to the recruitment of PBP1 to the division complex. Not essential for septum formation. The polypeptide is Cell cycle protein GpsB (Bacillus pumilus (strain SAFR-032)).